The following is a 258-amino-acid chain: Tryptophan synthase alpha chain (258 aa).

Catalysis depends on proton acceptor residues E52 and D63.

This sequence belongs to the TrpA family. In terms of assembly, tetramer of two alpha and two beta chains.

The enzyme catalyses (1S,2R)-1-C-(indol-3-yl)glycerol 3-phosphate + L-serine = D-glyceraldehyde 3-phosphate + L-tryptophan + H2O. Its pathway is amino-acid biosynthesis; L-tryptophan biosynthesis; L-tryptophan from chorismate: step 5/5. Functionally, the alpha subunit is responsible for the aldol cleavage of indoleglycerol phosphate to indole and glyceraldehyde 3-phosphate. In Streptococcus pneumoniae serotype 19F (strain G54), this protein is Tryptophan synthase alpha chain.